A 149-amino-acid chain; its full sequence is Gamma-glutamylaminecyclotransferase (149 aa).

7–10 provides a ligand contact to substrate; that stretch reads YGTL. Catalysis depends on glutamate 82, which acts as the Proton acceptor.

This sequence belongs to the gamma-glutamylcyclotransferase family. In terms of assembly, monomer.

The catalysed reaction is epsilon-(gamma-L-glutamyl)-L-lysine = 5-oxo-L-proline + L-lysine. Functionally, contributes to degradation of proteins cross-linked by transglutaminases by degrading the cross-link between a lysine and a glutamic acid residue. Catalyzes the formation of 5-oxo-L-proline from L-gamma-glutamyl-L-epsilon-lysine. Inactive with L-gamma-glutamyl-alpha-amino acid substrates such as L-gamma-glutamyl-L-alpha-cysteine and L-gamma-glutamyl-L-alpha-alanine. This is Gamma-glutamylaminecyclotransferase (Ggact) from Rattus norvegicus (Rat).